A 595-amino-acid chain; its full sequence is Protein alan shepard (595 aa).

The span at 1–12 (MHPRYSPAPPPH) shows a compositional bias: pro residues. Positions 1-82 (MHPRYSPAPP…ASVAAAPPTP (82 aa)) are disordered. Residue Tyr-5 is modified to Phosphotyrosine. Over residues 13 to 31 (QQQQQQQQQPMGGPHQQQS) the composition is skewed to low complexity. A compositionally biased stretch (gly residues) spans 32–43 (AGGGPGHGGGAS). The segment covering 50–68 (PNSQQLPPQMPRSQNYANG) has biased composition (polar residues). Over residues 69–78 (SSSAASVAAA) the composition is skewed to low complexity. A phosphotyrosine mark is found at Tyr-138 and Tyr-154. The interval 184–238 (RVPTAASPSNTNSSSSSNTGSQSGTLSTSLSNTTNTNTTMGPNGTAQNQNQQGGE) is disordered. Over residues 190–238 (SPSNTNSSSSSNTGSQSGTLSTSLSNTTNTNTTMGPNGTAQNQNQQGGE) the composition is skewed to low complexity. RRM domains follow at residues 243–316 (TNLY…MAKQ) and 322–401 (TNLY…FADG). The tract at residues 569-595 (MTDSEQASTAASPDEAYTQYPHQAAPK) is disordered.

Functionally, has a role in the perception of gravity. This chain is Protein alan shepard, found in Drosophila virilis (Fruit fly).